A 468-amino-acid polypeptide reads, in one-letter code: Factor XIIa inhibitor (468 aa).

The N-terminal stretch at 1-23 is a signal peptide; that stretch reads MASRLTPLTLLLLLLLAGDRVTS. Residues 27–60 are disordered; sequence VGPGNLQEGESEGDSQKGGILDGESIQGNEDSPT. Asn-65, Asn-176, Asn-227, and Asn-326 each carry an N-linked (GlcNAc...) asparagine glycan. 2 disulfides stabilise this stretch: Cys-97–Cys-396 and Cys-104–Cys-179.

Belongs to the serpin family. In terms of processing, N- and O-glycosylated.

The protein resides in the secreted. Functionally, may play a potentially crucial role in regulating important physiological pathways including complement activation, blood coagulation, fibrinolysis and the generation of kinins. The protein is Factor XIIa inhibitor of Bos taurus (Bovine).